The following is a 261-amino-acid chain: MKPASDVATRVIPCLDVDDGRVVKGVNFANLRDAGDPVELAAAYDAEGADELTFLDVTASSSGRSTMLEVVRRTAEQVFIPLTVGGGVRSIADVDVLLRAGADKVSVNTAAIARPELLAELSRQFGSQCIVLSVDARTVPEGSTPTTSGWEVTTHGGRRGTGIDAVEWASQGAELGVGEILLNSMDADGTKAGFDLKMLRAVRGAVTVPVIASGGAGAVEHFAPAVFAGADAVLAASVFHFGDLTIGEVKAAMKAEGIVVR.

Residues D16 and D135 contribute to the active site.

The protein belongs to the HisA/HisF family. In terms of assembly, heterodimer of HisH and HisF.

It is found in the cytoplasm. It carries out the reaction 5-[(5-phospho-1-deoxy-D-ribulos-1-ylimino)methylamino]-1-(5-phospho-beta-D-ribosyl)imidazole-4-carboxamide + L-glutamine = D-erythro-1-(imidazol-4-yl)glycerol 3-phosphate + 5-amino-1-(5-phospho-beta-D-ribosyl)imidazole-4-carboxamide + L-glutamate + H(+). The protein operates within amino-acid biosynthesis; L-histidine biosynthesis; L-histidine from 5-phospho-alpha-D-ribose 1-diphosphate: step 5/9. IGPS catalyzes the conversion of PRFAR and glutamine to IGP, AICAR and glutamate. The HisF subunit catalyzes the cyclization activity that produces IGP and AICAR from PRFAR using the ammonia provided by the HisH subunit. In Mycolicibacterium gilvum (strain PYR-GCK) (Mycobacterium gilvum (strain PYR-GCK)), this protein is Imidazole glycerol phosphate synthase subunit HisF.